We begin with the raw amino-acid sequence, 91 residues long: uncharacterized protein (91 aa).

Positions 1 to 25 (MLLQRIGIEHLRIWILLLLISLVPA) are cleaved as a signal peptide.

This is an uncharacterized protein from Caenorhabditis elegans.